The following is a 374-amino-acid chain: Chaperone protein DnaJ (374 aa).

The J domain maps to 6 to 70 (DYYDILGVSK…QKRAQYDQFG (65 aa)). Residues 135 to 217 (GKKTTIKYSR…CGGTGHTSQQ (83 aa)) form a CR-type zinc finger. The Zn(2+) site is built by cysteine 148, cysteine 151, cysteine 165, cysteine 168, cysteine 191, cysteine 194, cysteine 205, and cysteine 208. CXXCXGXG motif repeat units lie at residues 148-155 (CKTCGGSG), 165-172 (CHKCNGTG), 191-198 (CDVCNGTG), and 205-212 (CPTCGGTG). 2 disordered regions span residues 308-328 (GTNFRLKGKGAPRLRGNGTGD) and 347-374 (EALKQFAKASGEEPSGHGKSGFFDKFMN).

The protein belongs to the DnaJ family. As to quaternary structure, homodimer. Zn(2+) serves as cofactor.

The protein localises to the cytoplasm. In terms of biological role, participates actively in the response to hyperosmotic and heat shock by preventing the aggregation of stress-denatured proteins and by disaggregating proteins, also in an autonomous, DnaK-independent fashion. Unfolded proteins bind initially to DnaJ; upon interaction with the DnaJ-bound protein, DnaK hydrolyzes its bound ATP, resulting in the formation of a stable complex. GrpE releases ADP from DnaK; ATP binding to DnaK triggers the release of the substrate protein, thus completing the reaction cycle. Several rounds of ATP-dependent interactions between DnaJ, DnaK and GrpE are required for fully efficient folding. Also involved, together with DnaK and GrpE, in the DNA replication of plasmids through activation of initiation proteins. In Pediococcus pentosaceus (strain ATCC 25745 / CCUG 21536 / LMG 10740 / 183-1w), this protein is Chaperone protein DnaJ.